We begin with the raw amino-acid sequence, 386 residues long: Ovalbumin (386 aa).

Gly-2 bears the N-acetylglycine mark. Residues 22 to 48 (HHANENIFYSPFTIISALAMVYLGAKD) constitute a signal peptide (not cleaved). At Ser-69 the chain carries Phosphoserine. A disulfide bridge connects residues Cys-74 and Cys-121. N-linked (GlcNAc...) asparagine glycans are attached at residues Asn-293 and Asn-312. Ser-345 is subject to Phosphoserine. The N-linked (GlcNAc...) asparagine glycan is linked to Asn-372.

The protein belongs to the serpin family. Ov-serpin subfamily. The signal sequence is not cleaved. The functional signal for membrane translocation of ovalbumin becomes accessible when the nascent chain is 50 to 60 residues long. The hydrophobic sequence which lies between residues 27 and 43 folds back on the preceding residues to form an amphipathic hairpin structure which is the signal element recognized by the membrane. Major protein of egg white.

The protein localises to the secreted. In terms of biological role, storage protein of egg white. Lack protease inhibitory activity. The protein is Ovalbumin (SERPINB14) of Meleagris gallopavo (Wild turkey).